The chain runs to 301 residues: Haloalkane dehalogenase (301 aa).

Positions 47–284 (PPIVLLHGEP…INASHFIQED (238 aa)) constitute an AB hydrolase-1 domain. Aspartate 123 acts as the Nucleophile in catalysis. Aspartate 250 functions as the Proton donor in the catalytic mechanism. Histidine 279 (proton acceptor) is an active-site residue.

It belongs to the haloalkane dehalogenase family. Type 1 subfamily. Monomer.

It carries out the reaction 1-haloalkane + H2O = a halide anion + a primary alcohol + H(+). In terms of biological role, catalyzes hydrolytic cleavage of carbon-halogen bonds in halogenated aliphatic compounds, leading to the formation of the corresponding primary alcohols, halide ions and protons. This is Haloalkane dehalogenase from Mycolicibacterium paratuberculosis (strain ATCC BAA-968 / K-10) (Mycobacterium paratuberculosis).